The following is a 474-amino-acid chain: Cyclin-dependent kinase 18 (474 aa).

Residues S14, S74, S89, S98, S117, and S132 each carry the phosphoserine modification. The segment at 44-93 is disordered; sequence NLQLGPLGRDPPQECSTFSPTDSGEEPGQLSPGVQFQRRQNQRRFSMEDV. One can recognise a Protein kinase domain in the interval 144–425; sequence YVKLDKLGEG…AEAALSHSYF (282 aa). Residues 150–158 and K173 each bind ATP; that span reads LGEGTYATV. D265 (proton acceptor) is an active-site residue. S440 and S443 each carry phosphoserine.

It belongs to the protein kinase superfamily. CMGC Ser/Thr protein kinase family. CDC2/CDKX subfamily. Isoform 2 expression is limited to several subcortical nuclei of the basal gangli and the spinal cord. Isoform 1 is widely expressed.

It catalyses the reaction L-seryl-[protein] + ATP = O-phospho-L-seryl-[protein] + ADP + H(+). The catalysed reaction is L-threonyl-[protein] + ATP = O-phospho-L-threonyl-[protein] + ADP + H(+). Functionally, may play a role in signal transduction cascades in terminally differentiated cells. This is Cyclin-dependent kinase 18 (CDK18) from Homo sapiens (Human).